Here is a 125-residue protein sequence, read N- to C-terminus: Snaclec botrocetin subunit beta (125 aa).

3 disulfide bridges follow: Cys2–Cys13, Cys30–Cys121, and Cys98–Cys113. In terms of domain architecture, C-type lectin spans 9 to 122; it reads YEGHCYRFFK…CTRFKNFVCE (114 aa).

This sequence belongs to the snaclec family. In terms of assembly, heterodimer of subunits alpha and beta; disulfide-linked. Botrocetin and vWF form a soluble complex. In terms of tissue distribution, expressed by the venom gland.

It localises to the secreted. In terms of biological role, snaclec that binds to von Willebrand factor (VWF) and induces its interaction with GPIbalpha (GP1BA) (via the vWF A1 domain), resulting in platelet aggregation. The sequence is that of Snaclec botrocetin subunit beta from Bothrops jararaca (Jararaca).